Consider the following 419-residue polypeptide: ATP phosphoribosyltransferase regulatory subunit (419 aa).

This sequence belongs to the class-II aminoacyl-tRNA synthetase family. HisZ subfamily. Heteromultimer composed of HisG and HisZ subunits.

The protein resides in the cytoplasm. It functions in the pathway amino-acid biosynthesis; L-histidine biosynthesis; L-histidine from 5-phospho-alpha-D-ribose 1-diphosphate: step 1/9. Its function is as follows. Required for the first step of histidine biosynthesis. May allow the feedback regulation of ATP phosphoribosyltransferase activity by histidine. This chain is ATP phosphoribosyltransferase regulatory subunit, found in Ruminiclostridium cellulolyticum (strain ATCC 35319 / DSM 5812 / JCM 6584 / H10) (Clostridium cellulolyticum).